Consider the following 628-residue polypeptide: (+)-alpha-pinene synthase, chloroplastic (628 aa).

The N-terminal 48 residues, 1–48, are a transit peptide targeting the chloroplast; it reads MALVSAVPLNSKLCLRRTLFGFSHELKAIHSTVPNLGMCRGGKSIAPS. Mg(2+) contacts are provided by aspartate 379, aspartate 383, and aspartate 531. Residues 379 to 383 carry the DDXXD motif motif; that stretch reads DDIYD. Serine 539 is a binding site for K(+).

The protein belongs to the terpene synthase family. Tpsd subfamily. Mg(2+) serves as cofactor. It depends on Mn(2+) as a cofactor. Requires K(+) as cofactor.

It localises to the plastid. It is found in the chloroplast. The enzyme catalyses (2E)-geranyl diphosphate = (1R,5R)-alpha-pinene + diphosphate. It participates in terpene metabolism; oleoresin biosynthesis. Its function is as follows. Involved in defensive oleoresin formation in conifers in response to insect attack or other injury. Involved in monoterpene (C10) olefins biosynthesis. Produces mainly (+)-alpha-pinene (97%) with a small amount of (-)-alpha-pinene (3%). This is (+)-alpha-pinene synthase, chloroplastic (PT30) from Pinus taeda (Loblolly pine).